Here is a 1671-residue protein sequence, read N- to C-terminus: DNA polymerase (1671 aa).

Residues 135–326 (LKMLAFDIET…KVTYELGKEF (192 aa)) are 3'-5' exonuclease. Residues 524–665 (LAGILLAEGT…VSKLLSQLGI (142 aa)) form the DOD-type homing endonuclease 1 domain. The cysteines at positions 788 and 802 are disulfide-linked. In terms of domain architecture, DOD-type homing endonuclease 2 spans 1132 to 1265 (LLGYYVSEGY…LVLLLNSVGV (134 aa)). Cys1403 and Cys1406 are oxidised to a cystine.

This sequence belongs to the DNA polymerase type-B family. Undergoes a protein self splicing that involves a post-translational excision of the intervening region (intein) followed by peptide ligation.

The enzyme catalyses DNA(n) + a 2'-deoxyribonucleoside 5'-triphosphate = DNA(n+1) + diphosphate. In terms of biological role, has high processivity, a high polymerization rate and high fidelity. In addition to polymerase activity, also exhibits 3' to 5' exonuclease activity. Its function is as follows. Intein encoded endonucleases are thought to mediate intein mobility by site-specific recombination initiated by endonuclease cleavage at the 'homing site' in genes that lack the intein. Upon expression in E.coli PI-PkoI recognizes the minimal sequence 5'-GATTTTAGATCCCTGTACC-3' and cuts after T-10. PI-PkoII recognizes the minimal sequence 5'-CAGCTACTACGGTTAC-3' and cuts after C-10. Given the high intracellular K(+) content (&gt;0.5 M), PI-PkoII is probably more active than PI-PkoI in vivo. This chain is DNA polymerase (pol), found in Thermococcus kodakarensis (strain ATCC BAA-918 / JCM 12380 / KOD1) (Pyrococcus kodakaraensis (strain KOD1)).